The sequence spans 668 residues: Bestrophin-3 (668 aa).

At 1 to 31 (MTVTYSSKVANATFFGFHRLLLKWRGSIYKL) the chain is on the cytoplasmic side. Position 10 (alanine 10) interacts with Ca(2+). Residues 32 to 51 (LYREFIVFAVLYTAISLVYR) form a helical membrane-spanning segment. Residues 52 to 60 (LLLTGVQKR) are Extracellular-facing. Residues 61–82 (YFEKLSIYCDRYAEQIPVTFVL) traverse the membrane as a helical segment. Residues 83–237 (GFYVTLVVNR…DWVGIPLVYT (155 aa)) are Cytoplasmic-facing. Residues 238–255 (QVVTLAVYTFFFACLIGR) form a helical membrane-spanning segment. Residues 256–274 (QFLDPTKGYAGHDLDLYIP) lie on the Extracellular side of the membrane. A helical membrane pass occupies residues 275–288 (IFTLLQFFFYAGWL). Residues 289–668 (KVAEQLINPF…LNKETEESPK (380 aa)) are Cytoplasmic-facing. The Ca(2+) site is built by glutamine 293, asparagine 296, aspartate 301, and aspartate 304. 3 disordered regions span residues 400 to 454 (SAHE…KKSC), 473 to 493 (RETS…VRTS), and 532 to 570 (TGVQ…VSAS). Over residues 425-436 (PRDDLSPARDLL) the composition is skewed to basic and acidic residues. Residues 475–489 (TSQTSTLQSLTPQSS) show a composition bias toward low complexity. Residues 532-545 (TGVQPSKTEQQQGP) are compositionally biased toward polar residues.

This sequence belongs to the anion channel-forming bestrophin (TC 1.A.46) family. Calcium-sensitive chloride channel subfamily. As to expression, present in skeletal muscle and weakly in brain, spinal cord, bone marrow and retina.

Its subcellular location is the cell membrane. It catalyses the reaction chloride(in) = chloride(out). Functionally, ligand-gated anion channel that allows the movement of chloride monoatomic anions across cell membranes when activated by calcium (Ca2+). In Homo sapiens (Human), this protein is Bestrophin-3.